We begin with the raw amino-acid sequence, 192 residues long: MWLRFCAPALMAWYWVFFPSTSQAATMENDGQDGFWQRAKNNLSETWHNGQSQDLYVPAMTWHNRWTYSRQKIDKYNERPWGAGYGVSRLDSDGDWHGIYLMAFKDSFNKWEPIGGYGYEKRWKPVAGNDDFQLGLGFTAGVTMRDNWNYIPIPVLLPLASINYQRLSFQMTYIPGTHNNGNVYFAWLRWQL.

Positions 1–24 are cleaved as a signal peptide; sequence MWLRFCAPALMAWYWVFFPSTSQA. Catalysis depends on residues H63, D106, and S107.

The protein belongs to the lipid A palmitoyltransferase family. As to quaternary structure, homodimer.

It is found in the cell outer membrane. The enzyme catalyses a lipid A + a 1,2-diacyl-sn-glycero-3-phosphocholine = a hepta-acyl lipid A + a 2-acyl-sn-glycero-3-phosphocholine. It catalyses the reaction a lipid IVA + a 1,2-diacyl-sn-glycero-3-phosphocholine = a lipid IVB + a 2-acyl-sn-glycero-3-phosphocholine. It carries out the reaction a lipid IIA + a 1,2-diacyl-sn-glycero-3-phosphocholine = a lipid IIB + a 2-acyl-sn-glycero-3-phosphocholine. Transfers a fatty acid residue from the sn-1 position of a phospholipid to the N-linked hydroxyfatty acid chain on the proximal unit of lipid A or its precursors. This Musicola paradisiaca (strain Ech703) (Dickeya paradisiaca) protein is Lipid A acyltransferase PagP.